A 68-amino-acid chain; its full sequence is Small ribosomal subunit protein bS21 (68 aa).

Belongs to the bacterial ribosomal protein bS21 family.

This is Small ribosomal subunit protein bS21 from Endomicrobium trichonymphae.